The primary structure comprises 100 residues: Small ribosomal subunit protein uS14c (100 aa).

The protein belongs to the universal ribosomal protein uS14 family. Part of the 30S ribosomal subunit.

It localises to the plastid. The protein resides in the chloroplast. Binds 16S rRNA, required for the assembly of 30S particles. In Gossypium barbadense (Sea Island cotton), this protein is Small ribosomal subunit protein uS14c.